The chain runs to 398 residues: Probable peptidoglycan glycosyltransferase FtsW (398 aa).

Residues 1–20 lie on the Cytoplasmic side of the membrane; it reads MSTQAIRGARGLVLKWGAGR. Residues 21-41 form a helical membrane-spanning segment; the sequence is FYLDTVLLSVSLGLMLFGFVM. The Periplasmic portion of the chain corresponds to 42 to 57; it reads VSSASLHLGEKMASDS. The helical transmembrane segment at 58-78 threads the bilayer; it reads FYFPKHQLVHILLGLAAGWGA. Topologically, residues 79 to 92 are cytoplasmic; the sequence is ARVRLDTLERHSRS. Residues 93–113 form a helical membrane-spanning segment; the sequence is LFWAGIALLVLVLIPGVGKSV. Residues 114 to 121 lie on the Periplasmic side of the membrane; it reads NGSVRWIN. A helical membrane pass occupies residues 122-142; sequence LFGLRVQVSEVFKLVAAIYVA. Over 143–153 the chain is Cytoplasmic; the sequence is GYISRHLDTVR. The helical transmembrane segment at 154–174 threads the bilayer; it reads TSVKGMIFPLSLLAIGAVLLL. Topologically, residues 175–177 are periplasmic; the sequence is KEP. The helical transmembrane segment at 178–198 threads the bilayer; sequence DFGATAVVMATALGMLFLAGA. A topological domain (cytoplasmic) is located at residue R199. A helical transmembrane segment spans residues 200-220; sequence LWVFVGLLGLVAVAGTVLIYT. The Periplasmic segment spans residues 221–289; that stretch reads AEYRLRRVLS…LFSVIGEELG (69 aa). The chain crosses the membrane as a helical span at residues 290-310; sequence LWGATTVILLFAIVVWRALAI. Residues 311 to 318 are Cytoplasmic-facing; it reads GRLAERSG. Residues 319–339 form a helical membrane-spanning segment; that stretch reads NLFAAFLAYGIGIWLGLQSFI. Residues 340 to 355 are Periplasmic-facing; sequence NMGVNMGMLPTKGLTL. The helical transmembrane segment at 356–376 threads the bilayer; sequence PLMSYGGGSMMVVCAAIGLLF. Residues 377 to 398 are Cytoplasmic-facing; sequence RIRSEAVASFLGNGRKGLWPGV.

It belongs to the SEDS family. FtsW subfamily.

The protein resides in the cell inner membrane. The enzyme catalyses [GlcNAc-(1-&gt;4)-Mur2Ac(oyl-L-Ala-gamma-D-Glu-L-Lys-D-Ala-D-Ala)](n)-di-trans,octa-cis-undecaprenyl diphosphate + beta-D-GlcNAc-(1-&gt;4)-Mur2Ac(oyl-L-Ala-gamma-D-Glu-L-Lys-D-Ala-D-Ala)-di-trans,octa-cis-undecaprenyl diphosphate = [GlcNAc-(1-&gt;4)-Mur2Ac(oyl-L-Ala-gamma-D-Glu-L-Lys-D-Ala-D-Ala)](n+1)-di-trans,octa-cis-undecaprenyl diphosphate + di-trans,octa-cis-undecaprenyl diphosphate + H(+). It participates in cell wall biogenesis; peptidoglycan biosynthesis. In terms of biological role, peptidoglycan polymerase that is essential for cell division. This Methylococcus capsulatus (strain ATCC 33009 / NCIMB 11132 / Bath) protein is Probable peptidoglycan glycosyltransferase FtsW.